The primary structure comprises 334 residues: B3 domain-containing protein LOC_Os12g40090 (334 aa).

Residues 5-102 (RIRFFRLMTG…SFDVLIFDAS (98 aa)) constitute a DNA-binding region (TF-B3 1). A disordered region spans residues 142–178 (TSTPSVLIGSPHKASTSKKLSGKTKTNPRKEPEDPNC). Low complexity predominate over residues 154–166 (KASTSKKLSGKTK). Positions 227 to 326 (FVVVLQTAHV…TMTVHVIGKA (100 aa)) form a DNA-binding region, TF-B3 2.

Its subcellular location is the nucleus. The sequence is that of B3 domain-containing protein LOC_Os12g40090 from Oryza sativa subsp. japonica (Rice).